The chain runs to 275 residues: Bis(5'-nucleosyl)-tetraphosphatase, symmetrical (275 aa).

Belongs to the Ap4A hydrolase family.

The enzyme catalyses P(1),P(4)-bis(5'-adenosyl) tetraphosphate + H2O = 2 ADP + 2 H(+). Hydrolyzes diadenosine 5',5'''-P1,P4-tetraphosphate to yield ADP. In Marinomonas sp. (strain MWYL1), this protein is Bis(5'-nucleosyl)-tetraphosphatase, symmetrical.